The primary structure comprises 232 residues: Oxidoreductase 1 (232 aa).

The protein belongs to the MQO family. The cofactor is FAD.

Oxidoreductase; part of the gene cluster that mediates the biosynthesis of elsinochromes, pigments consisting of at least four interconvertible tautomers (A, B, C and D) that have a core phenolic quinone to which various side chains are attached and which play an important role in fungal pathogenesis. The non-reducing polyketide synthase PKS1 was proposed to iteratively catalyze decarboxylation between acetyl-CoA and malonyl-CoA subunits for polyketide chain elongation. The released polyketide undergoes cyclization to form an aromatic ring, and proceeds via serial modification steps to produce the heptaketide back- bone of elsinochrome. As elsinochrome has a symmetrical structure, two identical heptaketides are fused to form a core 1,2-dihydrobenzo-perylene ring structure, which can then be successively modified to produce the various derivatives of elsinochrome. Some of these reactions may be cooperatively carried out, at least in part, by the products of RDT1, OXR1 and PKS1. PRF1, embedded within the elsinochrome cluster possibly functions to stabilize some of the biosynthetic enzymes required for elsinochrome production. As prefoldin is a hexamer containing 2 a and 4 b subunits, additional prefoldin subunits, whose coding genes may not immediately link to the elsinochrome biosynthetic gene cluster, are required to fulfill the chaperone function. In addition, no methyltransferase-coding gene exists within the biosynthetic gene cluster, even though elsinochrome has four methyl groups at positions C3, C7, C8 and C12. Apparently, the identified gene cluster does not contain the entire entourage of genes responsible for elsinochrome biosynthesis. Once elsinochrome is synthesized, it must be exported outside the fungal cells, which is probably accomplished by the ECT1 transporter, to avoid toxicity. The sequence is that of Oxidoreductase 1 from Elsinoe fawcettii (Citrus scab fungus).